Here is a 186-residue protein sequence, read N- to C-terminus: UPF0200 protein PF1294 (186 aa).

7-14 (GMPGSGKG) provides a ligand contact to ATP.

It belongs to the UPF0200 family.

This Pyrococcus furiosus (strain ATCC 43587 / DSM 3638 / JCM 8422 / Vc1) protein is UPF0200 protein PF1294.